Reading from the N-terminus, the 753-residue chain is 5-methyltetrahydropteroyltriglutamate--homocysteine methyltransferase (753 aa).

Residues 17 to 20 (RELK) and lysine 117 each bind 5-methyltetrahydropteroyltri-L-glutamate. L-homocysteine is bound by residues 431–433 (IGS) and glutamate 484. L-methionine is bound by residues 431–433 (IGS) and glutamate 484. Residues 515-516 (RC) and tryptophan 561 each bind 5-methyltetrahydropteroyltri-L-glutamate. Residue aspartate 599 coordinates L-homocysteine. Aspartate 599 lines the L-methionine pocket. Glutamate 605 lines the 5-methyltetrahydropteroyltri-L-glutamate pocket. Positions 641, 643, and 665 each coordinate Zn(2+). The active-site Proton donor is histidine 694. Position 726 (cysteine 726) interacts with Zn(2+).

Belongs to the vitamin-B12 independent methionine synthase family. Zn(2+) serves as cofactor.

The enzyme catalyses 5-methyltetrahydropteroyltri-L-glutamate + L-homocysteine = tetrahydropteroyltri-L-glutamate + L-methionine. Its pathway is amino-acid biosynthesis; L-methionine biosynthesis via de novo pathway; L-methionine from L-homocysteine (MetE route): step 1/1. Its function is as follows. Catalyzes the transfer of a methyl group from 5-methyltetrahydrofolate to homocysteine resulting in methionine formation. This chain is 5-methyltetrahydropteroyltriglutamate--homocysteine methyltransferase, found in Escherichia coli O7:K1 (strain IAI39 / ExPEC).